The sequence spans 445 residues: MIEDNKENKDHAPERGRTAIIFSLKNEVGGLVKALKLFQEKHVNLVHIESRKSKRRNSEFEIFVDCDSNREQLNEIFQLLKSHVSIVSMNPTEHFNVQEDGDMENIPWYPKKISDLDKCANRVLMYGSDLDADHPGFKDNVYRKRRKYFADLAMNYKHGDPIPEIEFTEEEIKTWGTVYRELNKLYPTHACREYLKNLPLLTKYCGYREDNIPQLEDVSRFLKERTGFTIRPVAGYLSPRDFLAGLAFRVFHCTQYVRHSSDPLYTPEPDTCHELLGHVPLLAEPSFAQFSQEIGLASLGASDEAVQKLATCYFFTVEFGLCKQEGQLRVYGAGLLSSISELKHSLSGSAKVKPFDPKVTCKQECLITTFQEVYFVSESFEEAKEKMREFAKTIKRPFGVKYNPYTQSVQILKDTKSIASVVNELRHELDIVSDALSKMGKQLEV.

Residues alanine 19–histidine 94 enclose the ACT domain. Phosphoserine; by PKA is present on serine 58. Residues tyrosine 236, arginine 258, and threonine 266 each contribute to the L-tryptophan site. 3 residues coordinate Fe cation: histidine 273, histidine 278, and glutamate 318. L-tryptophan is bound by residues serine 337 and isoleucine 367.

This sequence belongs to the biopterin-dependent aromatic amino acid hydroxylase family. Homotetramer. The cofactor is Fe(2+).

The enzyme catalyses (6R)-L-erythro-5,6,7,8-tetrahydrobiopterin + L-tryptophan + O2 = 5-hydroxy-L-tryptophan + (4aS,6R)-4a-hydroxy-L-erythro-5,6,7,8-tetrahydrobiopterin. Its pathway is aromatic compound metabolism; serotonin biosynthesis; serotonin from L-tryptophan: step 1/2. In terms of biological role, oxidizes L-tryptophan to 5-hydroxy-l-tryptophan in the rate-determining step of serotonin biosynthesis. The polypeptide is Tryptophan 5-hydroxylase 1 (TPH1) (Gallus gallus (Chicken)).